Reading from the N-terminus, the 61-residue chain is Putative antitoxin VapB21 (61 aa).

It belongs to the UPF0165 family.

Its function is as follows. Possibly the antitoxin component of a type II toxin-antitoxin (TA) system. Its cognate toxin is VapC21 (Potential). The chain is Putative antitoxin VapB21 (vapB21) from Archaeoglobus fulgidus (strain ATCC 49558 / DSM 4304 / JCM 9628 / NBRC 100126 / VC-16).